The following is an 876-amino-acid chain: Leucine--tRNA ligase (876 aa).

The 'HIGH' region motif lies at 43–53 (PYPSGRIHMGH). The 'KMSKS' region signature appears at 630 to 634 (KMSKS). K633 provides a ligand contact to ATP.

This sequence belongs to the class-I aminoacyl-tRNA synthetase family.

It is found in the cytoplasm. The enzyme catalyses tRNA(Leu) + L-leucine + ATP = L-leucyl-tRNA(Leu) + AMP + diphosphate. The chain is Leucine--tRNA ligase from Methylocella silvestris (strain DSM 15510 / CIP 108128 / LMG 27833 / NCIMB 13906 / BL2).